We begin with the raw amino-acid sequence, 409 residues long: Lissencephaly-1 homolog (409 aa).

The 33-residue stretch at 7–39 folds into the LisH domain; sequence RRERSNQAIADYLGSNGYTDALEAFRKEADMPN. Residues 54–81 are a coiled coil; it reads TSVIRLQKKVMELEAKLSEAEKEAIEGA. WD repeat units follow at residues 104–145, 146–185, 189–228, 231–270, 273–332, 335–374, and 377–409; these read GHRA…RTLK, GHTD…ECVK, GHDH…CVKT, GHRE…CKAE, EHEN…CLFT, GHDN…CMKT, and AHSH…WECR.

Belongs to the WD repeat LIS1/nudF family.

It localises to the cytoplasm. Its subcellular location is the cytoskeleton. The protein localises to the microtubule organizing center. The protein resides in the centrosome. Positively regulates the activity of the minus-end directed microtubule motor protein dynein. May enhance dynein-mediated microtubule sliding by targeting dynein to the microtubule plus end. Required for several dynein- and microtubule-dependent processes. This Aedes aegypti (Yellowfever mosquito) protein is Lissencephaly-1 homolog.